Here is a 339-residue protein sequence, read N- to C-terminus: MRVYYDRDADLNLIKGKKVAVVGYGSQGHAHALNLKDSGVKDVAIALRKGSSSAKKAEGAGFKVMDVAEAAKWADVVMMLTPDELQADIYRDHLHDNMKKGAALLFAHGLNVHFNLIEPREDLDVLMVAPKGPGHTVRGEYQRGGGVPCLLAIHKDSSGNAHDLGLSYGSAIGGGRAGIIETSFREETETDLFGEQAVLCGGTVELIRAGFETLVEAGYAPEMAYFECLHEMKLIVDLIYEGGIANMNYSISNTAEYGEYVSGPRVITAETKAEMKRILGDIQSGRFARDWMLENKVNQSSFKATRARNNKHQIEEVGARLRDMMPWIKKGALVDKSKN.

A KARI N-terminal Rossmann domain is found at 1-182 (MRVYYDRDAD…GGGRAGIIET (182 aa)). Residues 24–27 (YGSQ), Arg-48, Ser-51, Ser-53, and 83–86 (DELQ) each bind NADP(+). The active site involves His-108. Gly-134 lines the NADP(+) pocket. In terms of domain architecture, KARI C-terminal knotted spans 183 to 328 (SFREETETDL…ARLRDMMPWI (146 aa)). Residues Asp-191, Glu-195, Glu-227, and Glu-231 each coordinate Mg(2+). Ser-252 provides a ligand contact to substrate.

This sequence belongs to the ketol-acid reductoisomerase family. Requires Mg(2+) as cofactor.

It catalyses the reaction (2R)-2,3-dihydroxy-3-methylbutanoate + NADP(+) = (2S)-2-acetolactate + NADPH + H(+). The enzyme catalyses (2R,3R)-2,3-dihydroxy-3-methylpentanoate + NADP(+) = (S)-2-ethyl-2-hydroxy-3-oxobutanoate + NADPH + H(+). It participates in amino-acid biosynthesis; L-isoleucine biosynthesis; L-isoleucine from 2-oxobutanoate: step 2/4. Its pathway is amino-acid biosynthesis; L-valine biosynthesis; L-valine from pyruvate: step 2/4. Functionally, involved in the biosynthesis of branched-chain amino acids (BCAA). Catalyzes an alkyl-migration followed by a ketol-acid reduction of (S)-2-acetolactate (S2AL) to yield (R)-2,3-dihydroxy-isovalerate. In the isomerase reaction, S2AL is rearranged via a Mg-dependent methyl migration to produce 3-hydroxy-3-methyl-2-ketobutyrate (HMKB). In the reductase reaction, this 2-ketoacid undergoes a metal-dependent reduction by NADPH to yield (R)-2,3-dihydroxy-isovalerate. This Afipia carboxidovorans (strain ATCC 49405 / DSM 1227 / KCTC 32145 / OM5) (Oligotropha carboxidovorans) protein is Ketol-acid reductoisomerase (NADP(+)).